A 126-amino-acid polypeptide reads, in one-letter code: Probable V-type proton ATPase subunit G (126 aa).

The tract at residues asparagine 23–glutamate 45 is disordered. Positions arginine 26–glutamine 35 are enriched in basic residues.

It belongs to the V-ATPase G subunit family. In terms of assembly, V-ATPase is a heteromultimeric enzyme made up of two complexes: the ATP-hydrolytic V1 complex and the proton translocation V0 complex. The V1 complex consists of three catalytic AB heterodimers that form a heterohexamer, three peripheral stalks each consisting of EG heterodimers, one central rotor including subunits D and F, and the regulatory subunits C and H. The proton translocation complex V0 consists of the proton transport subunit a, a ring of proteolipid subunits c9c'', rotary subunit d, subunits e and f, and the accessory subunits vah-19/Ac45 and vah-20/PRR.

Functionally, subunit of the V1 complex of vacuolar(H+)-ATPase (V-ATPase), a multisubunit enzyme composed of a peripheral complex (V1) that hydrolyzes ATP and a membrane integral complex (V0) that translocates protons. V-ATPase is responsible for acidifying and maintaining the pH of intracellular compartments and in some cell types, is targeted to the plasma membrane, where it is responsible for acidifying the extracellular environment. In neurons, required for necrotic cell death by promoting intracellular acidification. This chain is Probable V-type proton ATPase subunit G, found in Caenorhabditis briggsae.